A 329-amino-acid polypeptide reads, in one-letter code: Ubiquitin carboxyl-terminal hydrolase isozyme L5 (329 aa).

Residues 7–225 (EWCLMESDPG…IRFNLMAIVS (219 aa)) form the UCH catalytic domain. At Lys47 the chain carries N6-succinyllysine. Cys88 (nucleophile) is an active-site residue. N6-acetyllysine is present on Lys158. The active-site Proton donor is His164. Position 289 is an N6-succinyllysine (Lys289). In terms of domain architecture, ULD spans 291 to 319 (NYLPFIMELLKTLAEHQQLIPLVEKAKEK). The tract at residues 313–329 (VEKAKEKQNAKKAQETK) is interaction with ADRM1.

Belongs to the peptidase C12 family. In terms of assembly, component of the 19S (PA700) regulatory complex of the 26S proteasome. Interacts with ADRM1 and NFRKB; in vitro ADRM1 and NFRKB compete for interaction with UCHL5. Component of the INO80 complex; specifically part of a complex module associated with N-terminus of INO80.

The protein resides in the cytoplasm. It is found in the nucleus. It catalyses the reaction Thiol-dependent hydrolysis of ester, thioester, amide, peptide and isopeptide bonds formed by the C-terminal Gly of ubiquitin (a 76-residue protein attached to proteins as an intracellular targeting signal).. Its activity is regulated as follows. Activated by ADRM1. Inhibited by interaction with NFRKB. Protease that specifically cleaves 'Lys-48'-linked polyubiquitin chains. Deubiquitinating enzyme associated with the 19S regulatory subunit of the 26S proteasome. Putative regulatory component of the INO80 complex; however is inactive in the INO80 complex and is activated by a transient interaction of the INO80 complex with the proteasome via ADRM1. The polypeptide is Ubiquitin carboxyl-terminal hydrolase isozyme L5 (UCHL5) (Homo sapiens (Human)).